The sequence spans 438 residues: 3-phosphoshikimate 1-carboxyvinyltransferase (438 aa).

The 3-phosphoshikimate site is built by Lys-21, Ser-22, and Arg-26. Lys-21 provides a ligand contact to phosphoenolpyruvate. The phosphoenolpyruvate site is built by Gly-95 and Arg-123. 3-phosphoshikimate-binding residues include Ser-167, Gln-169, Asp-315, and Lys-342. Phosphoenolpyruvate is bound at residue Gln-169. Asp-315 acts as the Proton acceptor in catalysis. The phosphoenolpyruvate site is built by Arg-346 and Arg-387.

It belongs to the EPSP synthase family. Monomer.

It is found in the cytoplasm. The catalysed reaction is 3-phosphoshikimate + phosphoenolpyruvate = 5-O-(1-carboxyvinyl)-3-phosphoshikimate + phosphate. It functions in the pathway metabolic intermediate biosynthesis; chorismate biosynthesis; chorismate from D-erythrose 4-phosphate and phosphoenolpyruvate: step 6/7. Its function is as follows. Catalyzes the transfer of the enolpyruvyl moiety of phosphoenolpyruvate (PEP) to the 5-hydroxyl of shikimate-3-phosphate (S3P) to produce enolpyruvyl shikimate-3-phosphate and inorganic phosphate. The protein is 3-phosphoshikimate 1-carboxyvinyltransferase of Coxiella burnetii (strain RSA 331 / Henzerling II).